The following is a 79-amino-acid chain: D-alanyl carrier protein (79 aa).

In terms of domain architecture, Carrier spans 1-77; it reads MDIKSEVLAI…KIVAGVTELC (77 aa). At Ser35 the chain carries O-(pantetheine 4'-phosphoryl)serine.

Belongs to the DltC family. In terms of processing, 4'-phosphopantetheine is transferred from CoA to a specific serine of apo-DCP.

Its subcellular location is the cytoplasm. It functions in the pathway cell wall biogenesis; lipoteichoic acid biosynthesis. Its function is as follows. Carrier protein involved in the D-alanylation of lipoteichoic acid (LTA). The loading of thioester-linked D-alanine onto DltC is catalyzed by D-alanine--D-alanyl carrier protein ligase DltA. The DltC-carried D-alanyl group is further transferred to cell membrane phosphatidylglycerol (PG) by forming an ester bond, probably catalyzed by DltD. D-alanylation of LTA plays an important role in modulating the properties of the cell wall in Gram-positive bacteria, influencing the net charge of the cell wall. The sequence is that of D-alanyl carrier protein from Streptococcus agalactiae serotype Ia (strain ATCC 27591 / A909 / CDC SS700).